Consider the following 130-residue polypeptide: B1 protein (130 aa).

A signal peptide spans 1–12 (LTSLILLVAVQA). Intrachain disulfides connect Cys28-Cys59 and Cys99-Cys116.

This sequence belongs to the PBP/GOBP family. N-glycosylated. In terms of tissue distribution, tubular accessory sex gland.

The protein localises to the secreted. In terms of biological role, may be a carrier protein for lipids. The chain is B1 protein from Tenebrio molitor (Yellow mealworm beetle).